A 251-amino-acid polypeptide reads, in one-letter code: Insertion sequence IS5376 putative ATP-binding protein (251 aa).

ATP is bound at residue 105–112 (GPPGIGKT).

Belongs to the IS21/IS1162 putative ATP-binding protein family.

This chain is Insertion sequence IS5376 putative ATP-binding protein, found in Geobacillus stearothermophilus (Bacillus stearothermophilus).